We begin with the raw amino-acid sequence, 201 residues long: Small ribosomal subunit protein uS4 (201 aa).

One can recognise an S4 RNA-binding domain in the interval Ser-91–Ala-157.

This sequence belongs to the universal ribosomal protein uS4 family. As to quaternary structure, part of the 30S ribosomal subunit. Contacts protein S5. The interaction surface between S4 and S5 is involved in control of translational fidelity.

Functionally, one of the primary rRNA binding proteins, it binds directly to 16S rRNA where it nucleates assembly of the body of the 30S subunit. In terms of biological role, with S5 and S12 plays an important role in translational accuracy. This Mycolicibacterium paratuberculosis (strain ATCC BAA-968 / K-10) (Mycobacterium paratuberculosis) protein is Small ribosomal subunit protein uS4.